A 343-amino-acid chain; its full sequence is N-acetyl-gamma-glutamyl-phosphate reductase (343 aa).

The active site involves cysteine 147.

This sequence belongs to the NAGSA dehydrogenase family. Type 1 subfamily.

Its subcellular location is the cytoplasm. It carries out the reaction N-acetyl-L-glutamate 5-semialdehyde + phosphate + NADP(+) = N-acetyl-L-glutamyl 5-phosphate + NADPH + H(+). Its pathway is amino-acid biosynthesis; L-arginine biosynthesis; N(2)-acetyl-L-ornithine from L-glutamate: step 3/4. In terms of biological role, catalyzes the NADPH-dependent reduction of N-acetyl-5-glutamyl phosphate to yield N-acetyl-L-glutamate 5-semialdehyde. The polypeptide is N-acetyl-gamma-glutamyl-phosphate reductase (Staphylococcus saprophyticus subsp. saprophyticus (strain ATCC 15305 / DSM 20229 / NCIMB 8711 / NCTC 7292 / S-41)).